Consider the following 502-residue polypeptide: Neuronal acetylcholine receptor subunit alpha-7 (502 aa).

An N-terminal signal peptide occupies residues 1-22 (MRCSPGGVWLALAASLLHVSLQ). Topologically, residues 23-233 (GEFQRKLYKE…VTMRRRTLYY (211 aa)) are extracellular. Residues Arg-42 and Val-44 each contribute to the Ca(2+) site. N-linked (GlcNAc...) asparagine glycosylation is found at Asn-46, Asn-90, and Asn-133. Cys-150 and Cys-164 are joined by a disulfide. The Ca(2+) site is built by Ser-172 and Tyr-210. An intrachain disulfide couples Cys-212 to Cys-213. Transmembrane regions (helical) follow at residues 234–254 (GLNLLIPCVLISALALLVFLL), 259–279 (GEKISLGITVLLSLTVFMLLV), and 292–315 (LIAQYFASTMIIVGLSVVVTVIVL). Positions 260–267 (EKISLGIT) are essential for TMEM35A/NACHO-mediated proper subunit assembly and trafficking to cell membrane. Topologically, residues 316-466 (QYHHHDPDGG…CSEWKFAACV (151 aa)) are cytoplasmic. The chain crosses the membrane as a helical span at residues 467–489 (VDRLCLMAFSVFTIICTIGILMS).

It belongs to the ligand-gated ion channel (TC 1.A.9) family. Acetylcholine receptor (TC 1.A.9.1) subfamily. Alpha-7/CHRNA7 sub-subfamily. In terms of assembly, homopentamer. Can also form heteropentamers with CHRNB2, mainly found in basal forebrain cholinergic neurons. Interacts with RIC3; which is required for proper folding and assembly. Interacts with LYPD6. Interacts with CANX. Glycosylations at Asn-46, Asn-90 and Asn-133 are essential for TMEM35A/NACHO-mediated proper subunit assembly and trafficking to the cell membrane. In terms of tissue distribution, expressed in neuronal cells. Expressed in macrophages (at protein level).

It localises to the postsynaptic cell membrane. Its subcellular location is the cell membrane. It catalyses the reaction Ca(2+)(in) = Ca(2+)(out). It carries out the reaction K(+)(in) = K(+)(out). The enzyme catalyses Na(+)(in) = Na(+)(out). The catalysed reaction is choline(out) = choline(in). It catalyses the reaction NH4(+)(in) = NH4(+)(out). It carries out the reaction L-arginine(in) = L-arginine(out). The enzyme catalyses guanidine(out) = guanidine(in). With respect to regulation, activated by a myriad of ligands such as acetylcholine, cytisine, nicotine, choline and epibatidine. Oligomeric amyloid-beta protein 42 activates specifially CHRNA7:CHRNB2 nAchRs. Activity is modulated by positive allosteric modulators (PAMs), such as flavonoids, with a wide range of chemical diversity, pharmacological sensitivity and efficacy. AChR activity is inhibited by the antagonists alpha-conotoxons RgIA, ImI and ImII, small disulfide-constrained peptides from cone snails. Alpha-conotoxin PnIC selectively inhibits CHRNA7:CHRNB2 over CHRNA7 homopentamer. Its function is as follows. Component of neuronal acetylcholine receptors (nAChRs) that function as pentameric, ligand-gated cation channels with high calcium permeability among other activities. nAChRs are excitatory neurotrasnmitter receptors formed by a collection of nAChR subunits known to mediate synaptic transmission in the nervous system and the neuromuscular junction. Each nAchR subunit confers differential attributes to channel properties, including activation, deactivation and desensitization kinetics, pH sensitivity, cation permeability, and binding to allosteric modulators. CHRNA7 forms homopentameric neuronal acetylcholine receptors abundantly expressed in the central nervous system, characterized by fast desensitization and high calcium permeability. Also forms heteropentamers with CHRNB2, mainly expressed in basal forebrain cholinergic neurons. Involved in the modulation of calcium-dependent signaling pathways and influences the release of neurotransmitters, including dopamine, glutamate and GABA. Also expressed in non-neuronal cells such as immune cells like lymphocytes, monocytes and macrophages. In T cells, activation induces metabotropic signaling that results in an increase of intracellular Ca2+ concentrations, independent of ionotropic receptor functions. In macrophages, required for acetylcholine-mediated inhibition of TNF and other inflammatory cytokine release. Once activated by acetylcholine, nicotine or other agonists, selectively inhibits production of pro-inflammatory cytokines while leaving anti-inflammatory cytokines undisturbed. Stimulates the cholinergic anti-inflammatory pathway, controlling inflammation by inhibiting NFKB nuclear translocation and activating the JAK2-STAT3 pathway, independently of ion channel activity. Also expressed in the urothelium where it modulates reflex bladder activity by increasing intracellular calcium through internal stores and decreasing basal ATP release. The sequence is that of Neuronal acetylcholine receptor subunit alpha-7 from Homo sapiens (Human).